A 464-amino-acid polypeptide reads, in one-letter code: Argininosuccinate lyase (464 aa).

This sequence belongs to the lyase 1 family. Argininosuccinate lyase subfamily.

Its subcellular location is the cytoplasm. It catalyses the reaction 2-(N(omega)-L-arginino)succinate = fumarate + L-arginine. It functions in the pathway amino-acid biosynthesis; L-arginine biosynthesis; L-arginine from L-ornithine and carbamoyl phosphate: step 3/3. This is Argininosuccinate lyase from Sulfurovum sp. (strain NBC37-1).